The chain runs to 372 residues: Heat-inducible transcription repressor HrcA (372 aa).

This sequence belongs to the HrcA family.

Negative regulator of class I heat shock genes (grpE-dnaK-dnaJ and groELS operons). Prevents heat-shock induction of these operons. In Chloroflexus aurantiacus (strain ATCC 29366 / DSM 635 / J-10-fl), this protein is Heat-inducible transcription repressor HrcA.